Reading from the N-terminus, the 384-residue chain is N-acetylneuraminate epimerase (384 aa).

Residues 1–24 form the signal peptide; sequence MNMKTLLTYATLLSVTAFSHVVYA. Kelch repeat units follow at residues 46-90, 92-145, 147-184, 185-230, 233-281, 303-352, and 354-383; these read KVYV…SVIG, YIYL…YSPD, RQIL…RIVD, DYMG…VIEG, VTLI…VAGA, QAFE…TTSE, and VLIV…VEVI. The active-site Proton acceptor is the Glu-239.

It belongs to the NanM family. Homodimer.

The protein localises to the periplasm. It catalyses the reaction N-acetyl-alpha-neuraminate = N-acetyl-beta-neuraminate. Functionally, converts alpha-N-acetylneuranimic acid (Neu5Ac) to the beta-anomer, accelerating the equilibrium between the alpha- and beta-anomers. Probably facilitates sialidase-negative bacteria to compete successfully for limited amounts of extracellular Neu5Ac, which is likely taken up in the beta-anomer. In addition, the rapid removal of sialic acid from solution might be advantageous to the bacterium to damp down host responses. This chain is N-acetylneuraminate epimerase, found in Vibrio cholerae serotype O1 (strain ATCC 39315 / El Tor Inaba N16961).